The chain runs to 45 residues: Large ribosomal subunit protein bL34 (45 aa).

This sequence belongs to the bacterial ribosomal protein bL34 family.

The chain is Large ribosomal subunit protein bL34 from Beutenbergia cavernae (strain ATCC BAA-8 / DSM 12333 / CCUG 43141 / JCM 11478 / NBRC 16432 / NCIMB 13614 / HKI 0122).